We begin with the raw amino-acid sequence, 428 residues long: Putative zinc metalloprotease SA1105 (428 aa).

Histidine 21 serves as a coordination point for Zn(2+). The active site involves glutamate 22. Histidine 25 is a binding site for Zn(2+). Transmembrane regions (helical) follow at residues 172-194 (FLTL…IGLA), 309-331 (GSTL…GFSF), 352-374 (IISL…LIPI), and 401-420 (TTII…LVTW). A PDZ domain is found at 186-269 (ALVLFIGLAY…TKSVELTPKK (84 aa)).

It belongs to the peptidase M50B family. Requires Zn(2+) as cofactor.

It is found in the cell membrane. This Staphylococcus aureus (strain N315) protein is Putative zinc metalloprotease SA1105.